Reading from the N-terminus, the 131-residue chain is D-ribose pyranase (131 aa).

Catalysis depends on His20, which acts as the Proton donor. Residues Asp28, His98, and 120-122 each bind substrate; that span reads YAN.

The protein belongs to the RbsD / FucU family. RbsD subfamily. Homodecamer.

It localises to the cytoplasm. It carries out the reaction beta-D-ribopyranose = beta-D-ribofuranose. It participates in carbohydrate metabolism; D-ribose degradation; D-ribose 5-phosphate from beta-D-ribopyranose: step 1/2. Catalyzes the interconversion of beta-pyran and beta-furan forms of D-ribose. The sequence is that of D-ribose pyranase from Clostridium perfringens (strain 13 / Type A).